Consider the following 75-residue polypeptide: Sec-independent protein translocase protein TatA (75 aa).

A helical transmembrane segment spans residues 1 to 21 (MGSFSIWHWLIVLVIVALVFG). A disordered region spans residues 44–75 (KDANSDKPAEQVTQQKVADDTIDVQAKEKTNS).

It belongs to the TatA/E family. In terms of assembly, the Tat system comprises two distinct complexes: a TatABC complex, containing multiple copies of TatA, TatB and TatC subunits, and a separate TatA complex, containing only TatA subunits. Substrates initially bind to the TatABC complex, which probably triggers association of the separate TatA complex to form the active translocon.

Its subcellular location is the cell inner membrane. Part of the twin-arginine translocation (Tat) system that transports large folded proteins containing a characteristic twin-arginine motif in their signal peptide across membranes. TatA could form the protein-conducting channel of the Tat system. This Bordetella petrii (strain ATCC BAA-461 / DSM 12804 / CCUG 43448) protein is Sec-independent protein translocase protein TatA.